The primary structure comprises 607 residues: F-box protein At-B (607 aa).

The region spanning 9-47 is the F-box domain; the sequence is LAEEILKRLDLENLCSVACVSTTLRSAVVSGVLPSLTSL. LRR repeat units follow at residues 51–76, 77–99, 100–125, 130–155, 228–253, 262–286, 295–320, 321–346, 347–372, 373–397, 398–422, 424–447, 448–477, 478–503, 504–536, and 537–563; these read VFSP…TLNC, LRLN…HLLR, CSLL…TLEM, SPDV…QLNI, LDLI…DLED, DNDL…SLVR, FKRI…RLGG, FPKV…EVRG, AFLL…RLST, CPLI…DLGS, CKSI…NLAG, DVTD…SLRG, CRRV…DLGH, MPGI…SIRS, CFHV…NVHN, and CVSL…GMGQ.

This Arabidopsis thaliana (Mouse-ear cress) protein is F-box protein At-B (ATB).